The chain runs to 464 residues: Protein FAM90A18 (464 aa).

3 disordered regions span residues 1–42 (MMAR…DPRL), 70–387 (PATL…ASHD), and 415–437 (HSPEKPGAFLAQSPHVSEKSEAP). Composition is skewed to basic and acidic residues over residues 74 to 89 (GKKEGKENLKPWKPRV) and 97 to 114 (NKDKGEKEERPRQQDPQR). The segment covering 180 to 197 (LASLSPLRKASLSSSSSL) has biased composition (low complexity).

Belongs to the FAM90 family.

The chain is Protein FAM90A18 from Homo sapiens (Human).